Here is a 169-residue protein sequence, read N- to C-terminus: Protein yop1 (169 aa).

At 1-35 the chain is on the cytoplasmic side; sequence MASFQDRAQHTIAQLDKELSKYPVLNNLERQTSVP. A helical transmembrane segment spans residues 36-55; it reads KVYVILGLVGIYTFLVFFNI. A topological domain (lumenal) is located at residue Ala-56. Residues 57 to 76 traverse the membrane as a helical segment; it reads GEFLVNFAGFLIPGYYSLNA. The Cytoplasmic segment spans residues 77–86; it reads LFTSGKADDT. A helical transmembrane segment spans residues 87–103; that stretch reads QWLTYWVVYALLTVVES. At 104–105 the chain is on the lumenal side; sequence AI. The helical transmembrane segment at 106–124 threads the bilayer; sequence NAAYWFPFYYIFKFVLILW. Residues 125-169 lie on the Cytoplasmic side of the membrane; sequence MSLPQTNGAQVVFHSFLQPVLGRFFTSGSTSANLRAQADAASKSQ.

It belongs to the DP1 family. As to quaternary structure, oligomer.

It is found in the endoplasmic reticulum membrane. It localises to the golgi apparatus membrane. In terms of biological role, required to generate and maintain the structure of the tubular endoplasmic reticulum network and the vacuole. Induces high curvature in membranes and causes membrane tubule formation. Involved in membrane/vesicle trafficking. In Aspergillus fumigatus (strain ATCC MYA-4609 / CBS 101355 / FGSC A1100 / Af293) (Neosartorya fumigata), this protein is Protein yop1 (yop1).